We begin with the raw amino-acid sequence, 520 residues long: Probable methylmalonate-semialdehyde/malonate-semialdehyde dehydrogenase [acylating], mitochondrial (520 aa).

Residues Ala-169, Phe-171, Lys-195, Glu-198, Arg-199, and Ser-248 each contribute to the NAD(+) site. Cys-303 serves as the catalytic Nucleophile. Glu-403 contacts NAD(+).

This sequence belongs to the aldehyde dehydrogenase family. Homotetramer.

The protein localises to the mitochondrion. The enzyme catalyses 2-methyl-3-oxopropanoate + NAD(+) + CoA + H2O = propanoyl-CoA + hydrogencarbonate + NADH + H(+). The catalysed reaction is 3-oxopropanoate + NAD(+) + CoA + H2O = hydrogencarbonate + acetyl-CoA + NADH + H(+). Functionally, probable malonate and methylmalonate semialdehyde dehydrogenase involved in the catabolism of valine, thymine, and compounds catabolized by way of beta-alanine, including uracil and cytidine. This is Probable methylmalonate-semialdehyde/malonate-semialdehyde dehydrogenase [acylating], mitochondrial from Drosophila melanogaster (Fruit fly).